A 349-amino-acid polypeptide reads, in one-letter code: Leukotriene B4 receptor 1 (349 aa).

Topologically, residues 1–19 (MNTTSPAAPSSSGVSFISL) are extracellular. Asn2 is a glycosylation site (N-linked (GlcNAc...) asparagine). The helical transmembrane segment at 20–42 (LVIIVLSVALAVGLPGNSFVVWS) threads the bilayer. Over 43 to 54 (ILAKLRKRSVTA) the chain is Cytoplasmic. A helical membrane pass occupies residues 55 to 75 (LMVLHLALADLAVLLTAPFFL). Residues 76–91 (YSVAQGTWTFGLSSCR) lie on the Extracellular side of the membrane. Residues 92 to 113 (LFHYVCGVSMYASVLLIMTMSL) traverse the membrane as a helical segment. Topologically, residues 114-138 (DRSLAVALPFVSQKLRTKAVAWRVL) are cytoplasmic. The chain crosses the membrane as a helical span at residues 139 to 159 (AGIWVMSVLLATPVLLYRTVH). The Extracellular portion of the chain corresponds to 160 to 179 (LGLNNRSLTCFLKYPSERHR). Asn164 is a glycosylation site (N-linked (GlcNAc...) asparagine). The helical transmembrane segment at 180–200 (AFHLFFEVITGFLLPFLVVVA) threads the bilayer. At 201–222 (SYCDIGRRLRARRFRRSRRTGR) the chain is on the cytoplasmic side. A helical membrane pass occupies residues 223 to 243 (LVALIILAFAAFWLPYHVVNL). Residues 244–269 (AEGFRAAAGKALGSGPVGRRLLLARH) are Extracellular-facing. The chain crosses the membrane as a helical span at residues 270–290 (VLITLAFLSSSVNPLLYACAG). Residues 291 to 349 (GGLLRSAGVGFIAKLLEGTGSETSSSRRKGTLAQTLRGTPASPEPDPAESLTASTNPLE) are Cytoplasmic-facing. Positions 311–349 (SETSSSRRKGTLAQTLRGTPASPEPDPAESLTASTNPLE) are disordered.

It belongs to the G-protein coupled receptor 1 family. In terms of processing, phosphorylated by GRK6 upon leukotriene B4 binding; which promotes desensitization.

The protein localises to the cell membrane. Functionally, receptor for extracellular ATP &gt; UTP and ADP. The activity of this receptor is mediated by G proteins which activate a phosphatidylinositol-calcium second messenger system. May be the cardiac P2Y receptor involved in the regulation of cardiac muscle contraction through modulation of L-type calcium currents. Is a receptor for leukotriene B4, a potent chemoattractant involved in inflammation and immune response. The chain is Leukotriene B4 receptor 1 (LTB4R) from Bos taurus (Bovine).